The primary structure comprises 288 residues: MTEGRCAQHPDGLDVQDVCDPDDPRLDDFRDLNSIDRRPDLPTGKALVIAEGVLVVQRMLASRFTPLALFGTDRRLAELKDDLAGVGAPYYRASADVMARVIGFHLNRGVLAAARRVPEPSVAQVVAGARTVAVLEGVNDHENLGSIFRNAAGLSVDAVVFGTGCADPLYRRAVRVSMGHALLVPYARAADWPTELMTLKESGFRLLAMTPHGNACKLPEAIAAVSHERIALLVGAEGPGLTAAALRISDVRVRIPMSRGTDSLNVATAAALAFYERTRSGHHIGPGT.

The segment covering 1–12 (MTEGRCAQHPDG) has biased composition (basic and acidic residues). The segment at 1 to 20 (MTEGRCAQHPDGLDVQDVCD) is disordered.

This sequence belongs to the class IV-like SAM-binding methyltransferase superfamily. RNA methyltransferase TrmH family.

This is an uncharacterized protein from Mycobacterium bovis (strain ATCC BAA-935 / AF2122/97).